The primary structure comprises 467 residues: Siroheme synthase (467 aa).

A precorrin-2 dehydrogenase /sirohydrochlorin ferrochelatase region spans residues 1 to 203 (METLPIFMKL…GQEEAARHAM (203 aa)). NAD(+) contacts are provided by residues 22-23 (EI) and 43-44 (PE). The residue at position 128 (S128) is a Phosphoserine. Residues 216–467 (GEVYLVGGGP…APSPEVVSAG (252 aa)) form a uroporphyrinogen-III C-methyltransferase region. P225 is an S-adenosyl-L-methionine binding site. D248 serves as the catalytic Proton acceptor. K270 acts as the Proton donor in catalysis. S-adenosyl-L-methionine contacts are provided by residues 301–303 (GGD), I306, 331–332 (TA), M383, and G412.

This sequence in the N-terminal section; belongs to the precorrin-2 dehydrogenase / sirohydrochlorin ferrochelatase family. The protein in the C-terminal section; belongs to the precorrin methyltransferase family.

The enzyme catalyses uroporphyrinogen III + 2 S-adenosyl-L-methionine = precorrin-2 + 2 S-adenosyl-L-homocysteine + H(+). It catalyses the reaction precorrin-2 + NAD(+) = sirohydrochlorin + NADH + 2 H(+). The catalysed reaction is siroheme + 2 H(+) = sirohydrochlorin + Fe(2+). It participates in cofactor biosynthesis; adenosylcobalamin biosynthesis; precorrin-2 from uroporphyrinogen III: step 1/1. Its pathway is cofactor biosynthesis; adenosylcobalamin biosynthesis; sirohydrochlorin from precorrin-2: step 1/1. It functions in the pathway porphyrin-containing compound metabolism; siroheme biosynthesis; precorrin-2 from uroporphyrinogen III: step 1/1. The protein operates within porphyrin-containing compound metabolism; siroheme biosynthesis; siroheme from sirohydrochlorin: step 1/1. It participates in porphyrin-containing compound metabolism; siroheme biosynthesis; sirohydrochlorin from precorrin-2: step 1/1. Multifunctional enzyme that catalyzes the SAM-dependent methylations of uroporphyrinogen III at position C-2 and C-7 to form precorrin-2 via precorrin-1. Then it catalyzes the NAD-dependent ring dehydrogenation of precorrin-2 to yield sirohydrochlorin. Finally, it catalyzes the ferrochelation of sirohydrochlorin to yield siroheme. In Methylobacillus flagellatus (strain ATCC 51484 / DSM 6875 / VKM B-1610 / KT), this protein is Siroheme synthase.